Here is a 122-residue protein sequence, read N- to C-terminus: Large ribosomal subunit protein uL18 (122 aa).

The protein belongs to the universal ribosomal protein uL18 family. In terms of assembly, part of the 50S ribosomal subunit; part of the 5S rRNA/L5/L18/L25 subcomplex. Contacts the 5S and 23S rRNAs.

Functionally, this is one of the proteins that bind and probably mediate the attachment of the 5S RNA into the large ribosomal subunit, where it forms part of the central protuberance. This Leptospira interrogans serogroup Icterohaemorrhagiae serovar copenhageni (strain Fiocruz L1-130) protein is Large ribosomal subunit protein uL18.